Reading from the N-terminus, the 320-residue chain is Ubiquinone biosynthesis protein COQ4, mitochondrial (320 aa).

A mitochondrion-targeting transit peptide spans 1 to 31; the sequence is MFARSALGRSDQLVTALNSQKRQFVLTAATT. Zn(2+) is bound by residues His-205, Asp-206, His-209, and Glu-221.

The protein belongs to the COQ4 family. In terms of assembly, component of a multi-subunit COQ enzyme complex, composed of at least COQ3, COQ4, COQ5, COQ6, COQ7 and COQ9. Zn(2+) is required as a cofactor.

It localises to the mitochondrion inner membrane. The enzyme catalyses a 4-hydroxy-3-methoxy-5-(all-trans-polyprenyl)benzoate + H(+) = a 2-methoxy-6-(all-trans-polyprenyl)phenol + CO2. It participates in cofactor biosynthesis; ubiquinone biosynthesis. Its function is as follows. Lyase that catalyzes the C1-decarboxylation of 4-hydroxy-3-methoxy-5-(all-trans-polyprenyl)benzoic acid into 2-methoxy-6-(all-trans-polyprenyl)phenol during ubiquinone biosynthesis. The sequence is that of Ubiquinone biosynthesis protein COQ4, mitochondrial from Scheffersomyces stipitis (strain ATCC 58785 / CBS 6054 / NBRC 10063 / NRRL Y-11545) (Yeast).